Reading from the N-terminus, the 437-residue chain is Phosphomethylpyrimidine synthase (437 aa).

Residues N69, M98, Y127, H163, 185–187 (SRG), 226–229 (DACR), and E265 contribute to the substrate site. A Zn(2+)-binding site is contributed by H269. Y292 lines the substrate pocket. H333 is a binding site for Zn(2+). [4Fe-4S] cluster-binding residues include C409, C412, and C416.

This sequence belongs to the ThiC family. [4Fe-4S] cluster serves as cofactor.

It catalyses the reaction 5-amino-1-(5-phospho-beta-D-ribosyl)imidazole + S-adenosyl-L-methionine = 4-amino-2-methyl-5-(phosphooxymethyl)pyrimidine + CO + 5'-deoxyadenosine + formate + L-methionine + 3 H(+). The protein operates within cofactor biosynthesis; thiamine diphosphate biosynthesis. Functionally, catalyzes the synthesis of the hydroxymethylpyrimidine phosphate (HMP-P) moiety of thiamine from aminoimidazole ribotide (AIR) in a radical S-adenosyl-L-methionine (SAM)-dependent reaction. The chain is Phosphomethylpyrimidine synthase from Clostridium botulinum (strain Langeland / NCTC 10281 / Type F).